Consider the following 481-residue polypeptide: Aspartyl/glutamyl-tRNA(Asn/Gln) amidotransferase subunit B (481 aa).

Belongs to the GatB/GatE family. GatB subfamily. As to quaternary structure, heterotrimer of A, B and C subunits.

The catalysed reaction is L-glutamyl-tRNA(Gln) + L-glutamine + ATP + H2O = L-glutaminyl-tRNA(Gln) + L-glutamate + ADP + phosphate + H(+). The enzyme catalyses L-aspartyl-tRNA(Asn) + L-glutamine + ATP + H2O = L-asparaginyl-tRNA(Asn) + L-glutamate + ADP + phosphate + 2 H(+). Functionally, allows the formation of correctly charged Asn-tRNA(Asn) or Gln-tRNA(Gln) through the transamidation of misacylated Asp-tRNA(Asn) or Glu-tRNA(Gln) in organisms which lack either or both of asparaginyl-tRNA or glutaminyl-tRNA synthetases. The reaction takes place in the presence of glutamine and ATP through an activated phospho-Asp-tRNA(Asn) or phospho-Glu-tRNA(Gln). In Marinomonas sp. (strain MWYL1), this protein is Aspartyl/glutamyl-tRNA(Asn/Gln) amidotransferase subunit B.